The following is a 914-amino-acid chain: Isoleucine--tRNA ligase (914 aa).

Residues 64-74 carry the 'HIGH' region motif; the sequence is PYANGNFHLGH. An L-isoleucyl-5'-AMP-binding site is contributed by Glu557. Residues 598 to 602 carry the 'KMSKS' region motif; it reads PMSKS. Lys601 lines the ATP pocket. Positions 889, 892, 906, and 909 each coordinate Zn(2+).

Belongs to the class-I aminoacyl-tRNA synthetase family. IleS type 1 subfamily. In terms of assembly, monomer. The cofactor is Zn(2+).

It is found in the cytoplasm. It catalyses the reaction tRNA(Ile) + L-isoleucine + ATP = L-isoleucyl-tRNA(Ile) + AMP + diphosphate. Functionally, catalyzes the attachment of isoleucine to tRNA(Ile). As IleRS can inadvertently accommodate and process structurally similar amino acids such as valine, to avoid such errors it has two additional distinct tRNA(Ile)-dependent editing activities. One activity is designated as 'pretransfer' editing and involves the hydrolysis of activated Val-AMP. The other activity is designated 'posttransfer' editing and involves deacylation of mischarged Val-tRNA(Ile). This chain is Isoleucine--tRNA ligase, found in Leptospira interrogans serogroup Icterohaemorrhagiae serovar Lai (strain 56601).